Reading from the N-terminus, the 100-residue chain is Protein Tat (100 aa).

Positions M1–T20 are disordered. The interval M1–N24 is interaction with human CREBBP. A transactivation region spans residues M1–G48. Zn(2+) contacts are provided by C22, C25, and C27. Residues C22 to C37 form a cysteine-rich region. At K28 the chain carries N6-acetyllysine; by host PCAF. Zn(2+) is bound by residues C30, H33, C34, and C37. The segment at F38–G48 is core. Residues Y47 to H100 form a disordered region. The segment covering G48–R57 has biased composition (basic residues). A Nuclear localization signal, RNA-binding (TAR), and protein transduction motif is present at residues R49 to R57. The segment at R49 to E85 is interaction with the host capping enzyme RNGTT. N6-acetyllysine; by host EP300 and GCN5L2 occurs at positions 50 and 51. An asymmetric dimethylarginine; by host PRMT6 mark is found at R52 and R53. Residues D61 to P76 are compositionally biased toward polar residues. A Glycyl lysine isopeptide (Lys-Gly) (interchain with G-Cter in ubiquitin) cross-link involves residue K71. The Cell attachment site signature appears at R77–D79. Positions G82–H100 are enriched in basic and acidic residues.

The protein belongs to the lentiviruses Tat family. As to quaternary structure, interacts with host CCNT1. Associates with the P-TEFb complex composed at least of Tat, P-TEFb (CDK9 and CCNT1), TAR RNA, RNA Pol II. Recruits the HATs CREBBP, TAF1/TFIID, EP300, PCAF and GCN5L2. Interacts with host KAT5/Tip60; this interaction targets the latter to degradation. Interacts with the host deacetylase SIRT1. Interacts with host capping enzyme RNGTT; this interaction stimulates RNGTT. Binds to host KDR, and to the host integrins ITGAV/ITGB3 and ITGA5/ITGB1. Interacts with host KPNB1/importin beta-1 without previous binding to KPNA1/importin alpha-1. Interacts with EIF2AK2. Interacts with host nucleosome assembly protein NAP1L1; this interaction may be required for the transport of Tat within the nucleus, since the two proteins interact at the nuclear rim. Interacts with host C1QBP/SF2P32; this interaction involves lysine-acetylated Tat. Interacts with the host chemokine receptors CCR2, CCR3 and CXCR4. Interacts with host DPP4/CD26; this interaction may trigger an anti-proliferative effect. Interacts with host LDLR. Interacts with the host extracellular matrix metalloproteinase MMP1. Interacts with host PRMT6; this interaction mediates Tat's methylation. Interacts with, and is ubiquitinated by MDM2/Hdm2. Interacts with host PSMC3 and HTATIP2. Interacts with STAB1; this interaction may overcome SATB1-mediated repression of IL2 and IL2RA (interleukin) in T cells by binding to the same domain than HDAC1. Interacts (when acetylated) with human CDK13, thereby increasing HIV-1 mRNA splicing and promoting the production of the doubly spliced HIV-1 protein Nef. Interacts with host TBP; this interaction modulates the activity of transcriptional pre-initiation complex. Interacts with host RELA. Interacts with host PLSCR1; this interaction negatively regulates Tat transactivation activity by altering its subcellular distribution. Post-translationally, asymmetrical arginine methylation by host PRMT6 seems to diminish the transactivation capacity of Tat and affects the interaction with host CCNT1. Acetylation by EP300, CREBBP, GCN5L2/GCN5 and PCAF regulates the transactivation activity of Tat. EP300-mediated acetylation of Lys-50 promotes dissociation of Tat from the TAR RNA through the competitive binding to PCAF's bromodomain. In addition, the non-acetylated Tat's N-terminus can also interact with PCAF. PCAF-mediated acetylation of Lys-28 enhances Tat's binding to CCNT1. Lys-50 is deacetylated by SIRT1. In terms of processing, polyubiquitination by host MDM2 does not target Tat to degradation, but activates its transactivation function and fosters interaction with CCNT1 and TAR RNA. Post-translationally, phosphorylated by EIF2AK2 on serine and threonine residues adjacent to the basic region important for TAR RNA binding and function. Phosphorylation of Tat by EIF2AK2 is dependent on the prior activation of EIF2AK2 by dsRNA.

The protein localises to the host nucleus. It is found in the host nucleolus. It localises to the host cytoplasm. Its subcellular location is the secreted. Transcriptional activator that increases RNA Pol II processivity, thereby increasing the level of full-length viral transcripts. Recognizes a hairpin structure at the 5'-LTR of the nascent viral mRNAs referred to as the transactivation responsive RNA element (TAR) and recruits the cyclin T1-CDK9 complex (P-TEFb complex) that will in turn hyperphosphorylate the RNA polymerase II to allow efficient elongation. The CDK9 component of P-TEFb and other Tat-activated kinases hyperphosphorylate the C-terminus of RNA Pol II that becomes stabilized and much more processive. Other factors such as HTATSF1/Tat-SF1, SUPT5H/SPT5, and HTATIP2 are also important for Tat's function. Besides its effect on RNA Pol II processivity, Tat induces chromatin remodeling of proviral genes by recruiting the histone acetyltransferases (HATs) CREBBP, EP300 and PCAF to the chromatin. This also contributes to the increase in proviral transcription rate, especially when the provirus integrates in transcriptionally silent region of the host genome. To ensure maximal activation of the LTR, Tat mediates nuclear translocation of NF-kappa-B by interacting with host RELA. Through its interaction with host TBP, Tat may also modulate transcription initiation. Tat can reactivate a latently infected cell by penetrating in it and transactivating its LTR promoter. In the cytoplasm, Tat is thought to act as a translational activator of HIV-1 mRNAs. Functionally, extracellular circulating Tat can be endocytosed by surrounding uninfected cells via the binding to several surface receptors such as CD26, CXCR4, heparan sulfate proteoglycans (HSPG) or LDLR. Neurons are rarely infected, but they internalize Tat via their LDLR. Through its interaction with nuclear HATs, Tat is potentially able to control the acetylation-dependent cellular gene expression. Modulates the expression of many cellular genes involved in cell survival, proliferation or in coding for cytokines or cytokine receptors. Tat plays a role in T-cell and neurons apoptosis. Tat induced neurotoxicity and apoptosis probably contribute to neuroAIDS. Circulating Tat also acts as a chemokine-like and/or growth factor-like molecule that binds to specific receptors on the surface of the cells, affecting many cellular pathways. In the vascular system, Tat binds to ITGAV/ITGB3 and ITGA5/ITGB1 integrins dimers at the surface of endothelial cells and competes with bFGF for heparin-binding sites, leading to an excess of soluble bFGF. This chain is Protein Tat, found in Homo sapiens (Human).